The sequence spans 72 residues: Translation initiation factor IF-1 2 (72 aa).

Positions 1–72 constitute an S1-like domain; it reads MSKDDVIEVE…TRGRIVYRYK (72 aa).

This sequence belongs to the IF-1 family. Component of the 30S ribosomal translation pre-initiation complex which assembles on the 30S ribosome in the order IF-2 and IF-3, IF-1 and N-formylmethionyl-tRNA(fMet); mRNA recruitment can occur at any time during PIC assembly.

The protein resides in the cytoplasm. Its function is as follows. One of the essential components for the initiation of protein synthesis. Stabilizes the binding of IF-2 and IF-3 on the 30S subunit to which N-formylmethionyl-tRNA(fMet) subsequently binds. Helps modulate mRNA selection, yielding the 30S pre-initiation complex (PIC). Upon addition of the 50S ribosomal subunit IF-1, IF-2 and IF-3 are released leaving the mature 70S translation initiation complex. This chain is Translation initiation factor IF-1 2, found in Symbiobacterium thermophilum (strain DSM 24528 / JCM 14929 / IAM 14863 / T).